Consider the following 109-residue polypeptide: Parvalbumin beta (109 aa).

Alanine 2 is modified (N-acetylalanine). The segment at alanine 22 to threonine 41 is igE-binding. EF-hand domains follow at residues lysine 39–glycine 74 and leucine 78–glycine 109. Residues aspartate 52, aspartate 54, serine 56, phenylalanine 58, glutamate 60, glutamate 63, aspartate 91, aspartate 93, aspartate 95, lysine 97, and glutamate 102 each contribute to the Ca(2+) site.

The protein belongs to the parvalbumin family. Post-translationally, the N-terminus is blocked. Expressed in both white and dark muscles (at protein level). About eight and a half times lower expression in the dark muscle than in the white muscle (at protein level).

Its function is as follows. In muscle, parvalbumin is thought to be involved in relaxation after contraction. It binds two calcium ions. The chain is Parvalbumin beta from Scomber japonicus (Chub mackerel).